Consider the following 310-residue polypeptide: tRNA pseudouridine synthase B (310 aa).

The active-site Nucleophile is Asp47.

Belongs to the pseudouridine synthase TruB family. Type 1 subfamily.

It catalyses the reaction uridine(55) in tRNA = pseudouridine(55) in tRNA. Functionally, responsible for synthesis of pseudouridine from uracil-55 in the psi GC loop of transfer RNAs. The protein is tRNA pseudouridine synthase B of Caulobacter vibrioides (strain ATCC 19089 / CIP 103742 / CB 15) (Caulobacter crescentus).